The sequence spans 161 residues: RNA pyrophosphohydrolase (161 aa).

The region spanning 9–155 is the Nudix hydrolase domain; sequence PYRPCVGVML…KRRVYRQVVD (147 aa). The Nudix box signature appears at 44-65; the sequence is GGIDDGEELHPAALRELSEETG.

It belongs to the Nudix hydrolase family. RppH subfamily. A divalent metal cation is required as a cofactor.

Accelerates the degradation of transcripts by removing pyrophosphate from the 5'-end of triphosphorylated RNA, leading to a more labile monophosphorylated state that can stimulate subsequent ribonuclease cleavage. The chain is RNA pyrophosphohydrolase from Novosphingobium aromaticivorans (strain ATCC 700278 / DSM 12444 / CCUG 56034 / CIP 105152 / NBRC 16084 / F199).